A 612-amino-acid polypeptide reads, in one-letter code: Heparan-sulfate 6-O-sulfotransferase 2 (612 aa).

The Cytoplasmic segment spans residues 1–4 (MALP). The chain crosses the membrane as a helical; Signal-anchor for type II membrane protein span at residues 5-27 (AFAARALGPPLQPEQGAPARTTC). The tract at residues 9–52 (RALGPPLQPEQGAPARTTCPRRHSRVEAELAASRPGSVAASVRA) is disordered. Topologically, residues 28-612 (PRRHSRVEAE…DYIGSVETWR (585 aa)) are lumenal. An N-linked (GlcNAc...) asparagine glycan is attached at Asn-209. 233–241 (HIQKTGGTT) provides a ligand contact to 3'-phosphoadenylyl sulfate. Substrate is bound by residues 263 to 264 (KK), Arg-280, Trp-285, and His-290. The Proton acceptor role is filled by His-290. Residues Arg-325 and Ser-333 each coordinate 3'-phosphoadenylyl sulfate. 2 residues coordinate substrate: His-337 and Trp-344. N-linked (GlcNAc...) asparagine glycosylation is present at Asn-404. 457 to 459 (TQY) lines the 3'-phosphoadenylyl sulfate pocket. The N-linked (GlcNAc...) asparagine glycan is linked to Asn-460. A 3'-phosphoadenylyl sulfate-binding site is contributed by 463–464 (RA). The disordered stretch occupies residues 529–612 (HFQSQSQGQS…DYIGSVETWR (84 aa)). The span at 531-564 (QSQSQGQSQSQSPGQNLSQNPNPNPNQNLTQNLS) shows a compositional bias: low complexity. N-linked (GlcNAc...) asparagine glycosylation is found at Asn-546, Asn-558, Asn-562, Asn-574, and Asn-599. Residues 565 to 577 (HNLTPSSNPNSTQ) show a composition bias toward polar residues.

It belongs to the sulfotransferase 6 family.

It is found in the membrane. It carries out the reaction alpha-D-glucosaminyl-[heparan sulfate](n) + 3'-phosphoadenylyl sulfate = 6-sulfo-alpha-D-glucosaminyl-[heparan sulfate](n) + adenosine 3',5'-bisphosphate + H(+). 6-O-sulfation enzyme which catalyzes the transfer of sulfate from 3'-phosphoadenosine 5'-phosphosulfate (PAPS) to position 6 of the N-sulfoglucosamine residue (GlcNS) of heparan sulfate. In Mus musculus (Mouse), this protein is Heparan-sulfate 6-O-sulfotransferase 2 (Hs6st2).